The sequence spans 455 residues: Beta-cyclopiazonate dehydrogenase (455 aa).

The N-terminal stretch at 1–20 (MATRIASFIGISTVASLALA) is a signal peptide.

This sequence belongs to the beta-cyclopiazonate dehydrogenase family. It depends on FAD as a cofactor.

The enzyme catalyses beta-cyclopiazonate + A = alpha-cyclopiazonate + AH2. In terms of biological role, beta-cyclopiazonate dehydrogenase involved in the synthesis of the fungal neurotoxin alpha-cyclopiazonic acid (CPA). CpaO carries out the dehydrogenation of beta-CPA to yield an unstable enimine product, which is captured by intramolecular cyclization to create the pentacyclic fused scaffold of alpha-cyclopiazonate. The chain is Beta-cyclopiazonate dehydrogenase from Aspergillus flavus (strain ATCC 200026 / FGSC A1120 / IAM 13836 / NRRL 3357 / JCM 12722 / SRRC 167).